Here is a 448-residue protein sequence, read N- to C-terminus: Tubulin alpha chain, nucleomorph (448 aa).

Q11, E71, S140, G144, T145, T179, N206, and N228 together coordinate GTP. E71 is a Mg(2+) binding site. The active site involves E254.

Belongs to the tubulin family. In terms of assembly, dimer of alpha and beta chains. A typical microtubule is a hollow water-filled tube with an outer diameter of 25 nm and an inner diameter of 15 nM. Alpha-beta heterodimers associate head-to-tail to form protofilaments running lengthwise along the microtubule wall with the beta-tubulin subunit facing the microtubule plus end conferring a structural polarity. Microtubules usually have 13 protofilaments but different protofilament numbers can be found in some organisms and specialized cells. Mg(2+) serves as cofactor.

The enzyme catalyses GTP + H2O = GDP + phosphate + H(+). Its function is as follows. Tubulin is the major constituent of microtubules, a cylinder consisting of laterally associated linear protofilaments composed of alpha- and beta-tubulin heterodimers. Microtubules grow by the addition of GTP-tubulin dimers to the microtubule end, where a stabilizing cap forms. Below the cap, tubulin dimers are in GDP-bound state, owing to GTPase activity of alpha-tubulin. This is Tubulin alpha chain, nucleomorph (tubA) from Guillardia theta (Cryptophyte).